The following is a 391-amino-acid chain: MAKELRYNAEARLRLERGVNALADAVKVTLGPKGRNAVLEKLTGPPTITNDGVTIAREIQLRDPFANMGAQLVKEVAMKTNGVVGDGTTTATVLAQAMVREGLRAVEQGANPMRVRRGIERAVTAVLGSLTEQAVQIGGRSDLERIARWPPATTRWSVRSSPPPSNTSARTASSPPRRATHSGCRSRSSTASEFDHGYISGYMVTNPERMEAVLDNPVVLLTNKKITSVQEIMPAIEVAKRADRPLLVLAEDVDGPALQLLVGGNMHNTMRSVVVRAPGFGHRRIAELEDLSVALGGHVIAKDTGIELSEVSMEHLGTVMRVTVTENETTIVGAHGEQELVDARVRHLEAQLERARIDADRDALELRIARMTGRVAVIRVGGVTSVELKER.

The segment at 153–191 (TTRWSVRSSPPPSNTSARTASSPPRRATHSGCRSRSSTA) is disordered. Positions 154-174 (TRWSVRSSPPPSNTSARTASS) are enriched in polar residues.

This sequence belongs to the chaperonin (HSP60) family.

Functionally, probably plays an essential role in the productive folding of PrmA and PrmC, and thus in the formation of the active PrmABCD complex. This chain is Probable chaperonin-like protein PrmG, found in Gordonia sp. (strain TY-5).